An 83-amino-acid polypeptide reads, in one-letter code: uncharacterized protein (83 aa).

The next 3 membrane-spanning stretches (helical) occupy residues 7–26, 36–58, and 65–82; these read FARFVEYSFFAVFAALIVSY, LSPLLVFLLTLIPAIGLILILPF, and ILTVAVLIEMAVALYLAF.

It is found in the cell membrane. This is an uncharacterized protein from Archaeoglobus fulgidus (strain ATCC 49558 / DSM 4304 / JCM 9628 / NBRC 100126 / VC-16).